A 576-amino-acid polypeptide reads, in one-letter code: Zinc finger protein 791 (576 aa).

The KRAB domain occupies 4-90 (VAFKDVSVSF…AETFSPNLSV (87 aa)). C2H2-type zinc fingers lie at residues 100 to 122 (YECT…MRSH), 132 to 154 (YKCK…ERSH), 160 to 182 (YKCK…EQTH), 188 to 210 (YECK…ERIH), 216 to 238 (YECK…ERTH), 244 to 266 (YACK…MITH), 272 to 294 (YKCK…ERIH), 300 to 322 (YTCK…ERIH), 328 to 350 (YKCK…VRVH), 356 to 378 (YKCK…ERTH), 384 to 406 (YECK…KRNH), 412 to 434 (YECK…MITH), 440 to 462 (YKCR…ERTH), 468 to 490 (YECK…KRTH), 496 to 518 (YECK…MRMH), 524 to 546 (YKCK…TRIH), and 552 to 574 (LECK…MRMH).

Belongs to the krueppel C2H2-type zinc-finger protein family.

It localises to the nucleus. May be involved in transcriptional regulation. This Pongo abelii (Sumatran orangutan) protein is Zinc finger protein 791 (ZNF791).